Here is a 734-residue protein sequence, read N- to C-terminus: Ribosomal RNA large subunit methyltransferase K/L (734 aa).

In terms of domain architecture, THUMP spans 49–167 (QAYRVCMWSR…KTEHTYCLDL (119 aa)).

Belongs to the methyltransferase superfamily. RlmKL family.

It is found in the cytoplasm. The catalysed reaction is guanosine(2445) in 23S rRNA + S-adenosyl-L-methionine = N(2)-methylguanosine(2445) in 23S rRNA + S-adenosyl-L-homocysteine + H(+). The enzyme catalyses guanosine(2069) in 23S rRNA + S-adenosyl-L-methionine = N(2)-methylguanosine(2069) in 23S rRNA + S-adenosyl-L-homocysteine + H(+). In terms of biological role, specifically methylates the guanine in position 2445 (m2G2445) and the guanine in position 2069 (m7G2069) of 23S rRNA. The chain is Ribosomal RNA large subunit methyltransferase K/L from Acinetobacter baylyi (strain ATCC 33305 / BD413 / ADP1).